Consider the following 127-residue polypeptide: Large ribosomal subunit protein bL17 (127 aa).

Belongs to the bacterial ribosomal protein bL17 family. Part of the 50S ribosomal subunit. Contacts protein L32.

The sequence is that of Large ribosomal subunit protein bL17 from Xanthomonas euvesicatoria pv. vesicatoria (strain 85-10) (Xanthomonas campestris pv. vesicatoria).